The chain runs to 211 residues: Arginine exporter protein ArgO (211 aa).

Helical transmembrane passes span 1–21 (MFSY…PLGP), 37–57 (IMIA…GIFG), 68–88 (LLAL…FGAF), 111–131 (IIAT…DTFV), 147–167 (WFAL…AILA), and 182–202 (IINL…ARDG).

Belongs to the LysE/ArgO transporter (TC 2.A.75) family.

The protein localises to the cell inner membrane. The catalysed reaction is L-arginine(in) = L-arginine(out). Functionally, involved in the export of arginine. Important to control the intracellular level of arginine and the correct balance between arginine and lysine. The sequence is that of Arginine exporter protein ArgO from Escherichia coli O157:H7.